A 527-amino-acid polypeptide reads, in one-letter code: Probable serine/threonine-protein kinase DDB_G0271538 (527 aa).

Positions 1-10 (MNINFSKDDI) are enriched in basic and acidic residues. The disordered stretch occupies residues 1–24 (MNINFSKDDITGLPKSTKEEDEND). The 262-residue stretch at 33-294 (LFMDVEIGRG…KIVVEGLKVL (262 aa)) folds into the Protein kinase domain. Residues 39–47 (IGRGSFGQV) and K60 contribute to the ATP site. The active-site Proton acceptor is D156. Disordered regions lie at residues 304 to 375 (VKGK…ISGS), 422 to 452 (FTPP…DDVP), and 485 to 527 (TALD…KKKL). Positions 313–324 (DPDEDSFIDPND) are enriched in acidic residues. Over residues 325–359 (DSNNNNNSENNNNNNDNSNENNENNNENNNNSNEN) the composition is skewed to low complexity. Acidic residues predominate over residues 440 to 452 (VDEDEDEDEDDVP). Over residues 512 to 527 (PKKKPNNKNKKKKKKL) the composition is skewed to basic residues.

It belongs to the protein kinase superfamily. TKL Ser/Thr protein kinase family.

The catalysed reaction is L-seryl-[protein] + ATP = O-phospho-L-seryl-[protein] + ADP + H(+). It carries out the reaction L-threonyl-[protein] + ATP = O-phospho-L-threonyl-[protein] + ADP + H(+). The chain is Probable serine/threonine-protein kinase DDB_G0271538 from Dictyostelium discoideum (Social amoeba).